Consider the following 157-residue polypeptide: MQKIGIYPGTFDPVTNGHIDIIHRSSELFEKLIVAVAYSCAKNPMFSLKERLEMIQLATKGFKNVECVAFEGLLANLAKEYHCKVLVRGLRVVSDFEYELQMGYANKSLNHELETLYFMPTLQNAFISSSIVRSIIAHKGDASHLVPKEIHPFISKV.

T10 is a substrate binding site. ATP is bound by residues 10–11 (TF) and H18. Substrate is bound by residues K42, L74, and R88. ATP is bound by residues 89–91 (GLR), E99, and 124–130 (NAFISSS).

Belongs to the bacterial CoaD family. As to quaternary structure, homohexamer. Requires Mg(2+) as cofactor.

Its subcellular location is the cytoplasm. It carries out the reaction (R)-4'-phosphopantetheine + ATP + H(+) = 3'-dephospho-CoA + diphosphate. It functions in the pathway cofactor biosynthesis; coenzyme A biosynthesis; CoA from (R)-pantothenate: step 4/5. Reversibly transfers an adenylyl group from ATP to 4'-phosphopantetheine, yielding dephospho-CoA (dPCoA) and pyrophosphate. In Helicobacter pylori (strain Shi470), this protein is Phosphopantetheine adenylyltransferase.